We begin with the raw amino-acid sequence, 390 residues long: Na(+)/H(+) antiporter NhaA (390 aa).

Helical transmembrane passes span A14–N34, M61–V81, S97–F117, A126–L146, V156–F176, L181–L201, V221–L241, A256–V276, G280–I300, G305–V325, I330–L350, and W362–L382.

It belongs to the NhaA Na(+)/H(+) (TC 2.A.33) antiporter family.

It localises to the cell inner membrane. It catalyses the reaction Na(+)(in) + 2 H(+)(out) = Na(+)(out) + 2 H(+)(in). In terms of biological role, na(+)/H(+) antiporter that extrudes sodium in exchange for external protons. The chain is Na(+)/H(+) antiporter NhaA from Cronobacter sakazakii (strain ATCC BAA-894) (Enterobacter sakazakii).